We begin with the raw amino-acid sequence, 207 residues long: Large ribosomal subunit protein bL25 (207 aa).

The tract at residues 186-207 (SKPRGGAGAEGEADAEGEAAAE) is disordered. Residues 196 to 207 (GEADAEGEAAAE) show a composition bias toward acidic residues.

This sequence belongs to the bacterial ribosomal protein bL25 family. CTC subfamily. Part of the 50S ribosomal subunit; part of the 5S rRNA/L5/L18/L25 subcomplex. Contacts the 5S rRNA. Binds to the 5S rRNA independently of L5 and L18.

Functionally, this is one of the proteins that binds to the 5S RNA in the ribosome where it forms part of the central protuberance. The sequence is that of Large ribosomal subunit protein bL25 from Methylobacillus flagellatus (strain ATCC 51484 / DSM 6875 / VKM B-1610 / KT).